The primary structure comprises 360 residues: Vomilenine reductase (360 aa).

Residues 23–351 (GLLSPFNFSR…KADVKYRFVI (329 aa)) form the Enoyl reductase (ER) domain. A Zn(2+)-binding site is contributed by C50. S52 serves as a coordination point for an alcohol. S52 serves as a coordination point for NADP(+). D53, H72, E73, C103, C106, C109, C117, and C166 together coordinate Zn(2+). Residue H72 participates in an alcohol binding. NADP(+) contacts are provided by L192, G194, L195, S214, T215, S216, K219, K220, V277, A279, S301, and R348.

This sequence belongs to the zinc-containing alcohol dehydrogenase family. Class-P subfamily. Homodimer. Zn(2+) serves as cofactor. In terms of tissue distribution, confined to roots.

It is found in the cytoplasm. The catalysed reaction is (2R)-1,2-dihydrovomilenine + NADP(+) = vomilenine + NADPH + H(+). Its pathway is alkaloid biosynthesis; ajmaline biosynthesis. Inhibited by EDTA and p-hydroxymercuribenzoate, a sulfhydryl reagent. Its function is as follows. Alcohol dehydrogenase involved in the biosynthesis of ajmaline-type monoterpenoid indole alkaloids (MIAs) natural products, important plant-derived pharmaceuticals used in the therapy of heart disorders. Catalyzes the conversion of vomilenine to 1,2-dihydrovomilenine, an intermediate chemical in the biosynthesis of ajmaline. This chain is Vomilenine reductase, found in Rauvolfia serpentina (Serpentine wood).